A 514-amino-acid polypeptide reads, in one-letter code: Protein nucleotidyltransferase YdiU (514 aa).

ATP-binding residues include Gly-90, Gly-92, Arg-93, Lys-113, Asp-125, Gly-126, Arg-176, and Arg-183. Asp-267 acts as the Proton acceptor in catalysis. Residues Asn-268 and Asp-277 each coordinate Mg(2+). Asp-277 contributes to the ATP binding site.

This sequence belongs to the SELO family. Mg(2+) serves as cofactor. The cofactor is Mn(2+).

It carries out the reaction L-seryl-[protein] + ATP = 3-O-(5'-adenylyl)-L-seryl-[protein] + diphosphate. The catalysed reaction is L-threonyl-[protein] + ATP = 3-O-(5'-adenylyl)-L-threonyl-[protein] + diphosphate. The enzyme catalyses L-tyrosyl-[protein] + ATP = O-(5'-adenylyl)-L-tyrosyl-[protein] + diphosphate. It catalyses the reaction L-histidyl-[protein] + UTP = N(tele)-(5'-uridylyl)-L-histidyl-[protein] + diphosphate. It carries out the reaction L-seryl-[protein] + UTP = O-(5'-uridylyl)-L-seryl-[protein] + diphosphate. The catalysed reaction is L-tyrosyl-[protein] + UTP = O-(5'-uridylyl)-L-tyrosyl-[protein] + diphosphate. Nucleotidyltransferase involved in the post-translational modification of proteins. It can catalyze the addition of adenosine monophosphate (AMP) or uridine monophosphate (UMP) to a protein, resulting in modifications known as AMPylation and UMPylation. This Photobacterium profundum (strain SS9) protein is Protein nucleotidyltransferase YdiU.